The following is a 197-amino-acid chain: Nucleoid occlusion factor SlmA (197 aa).

The region spanning 7 to 67 (INRREHILQC…GLIEFIEESL (61 aa)) is the HTH tetR-type domain. Residues 30 to 49 (TTAKLASEVGVSEAALYRHF) constitute a DNA-binding region (H-T-H motif).

The protein belongs to the nucleoid occlusion factor SlmA family. Homodimer. Interacts with FtsZ.

The protein localises to the cytoplasm. Its subcellular location is the nucleoid. Its function is as follows. Required for nucleoid occlusion (NO) phenomenon, which prevents Z-ring formation and cell division over the nucleoid. Acts as a DNA-associated cell division inhibitor that binds simultaneously chromosomal DNA and FtsZ, and disrupts the assembly of FtsZ polymers. SlmA-DNA-binding sequences (SBS) are dispersed on non-Ter regions of the chromosome, preventing FtsZ polymerization at these regions. This Shewanella oneidensis (strain ATCC 700550 / JCM 31522 / CIP 106686 / LMG 19005 / NCIMB 14063 / MR-1) protein is Nucleoid occlusion factor SlmA.